The following is a 455-amino-acid chain: L-serine dehydratase 2 (455 aa).

It belongs to the iron-sulfur dependent L-serine dehydratase family. [4Fe-4S] cluster is required as a cofactor. Post-translationally, activated by post-translational modification by a system involving at least three gene products. Activation is mimicked in vitro by iron and dithiothreitol. There is considerable evidence for a free-radical activation mechanism.

It catalyses the reaction L-serine = pyruvate + NH4(+). The protein operates within carbohydrate biosynthesis; gluconeogenesis. Functionally, also deaminates threonine, particularly when it is present in high concentration. The polypeptide is L-serine dehydratase 2 (sdaB) (Escherichia coli (strain K12)).